A 332-amino-acid chain; its full sequence is L-lactate dehydrogenase A chain (332 aa).

NAD(+) contacts are provided by residues 29–57 (GAVG…VEDK) and arginine 99. Substrate-binding residues include arginine 106, asparagine 138, and arginine 169. Asparagine 138 is a binding site for NAD(+). Histidine 193 functions as the Proton acceptor in the catalytic mechanism. Threonine 248 contacts substrate.

The protein belongs to the LDH/MDH superfamily. LDH family. In terms of assembly, homotetramer.

The protein resides in the cytoplasm. It catalyses the reaction (S)-lactate + NAD(+) = pyruvate + NADH + H(+). It participates in fermentation; pyruvate fermentation to lactate; (S)-lactate from pyruvate: step 1/1. Interconverts simultaneously and stereospecifically pyruvate and lactate with concomitant interconversion of NADH and NAD(+). In Python regius (Ball python), this protein is L-lactate dehydrogenase A chain (LDHA).